Reading from the N-terminus, the 454-residue chain is UDP-glycosyltransferase 79A2 (454 aa).

Residues serine 269, 330 to 331 (WV), 348 to 356 (HAGYGSVIE), and 370 to 373 (KVDQ) contribute to the UDP-alpha-D-glucose site.

It belongs to the UDP-glycosyltransferase family.

Its function is as follows. May glycosylate diterpenes or flavonols in leaves. This chain is UDP-glycosyltransferase 79A2, found in Stevia rebaudiana (Stevia).